The following is a 382-amino-acid chain: Chaperone protein DnaJ (382 aa).

Residues 5–70 (DFYEILGVPK…QKRAAYDQYG (66 aa)) enclose the J domain. Residues 137–215 (GVTKEIRIPT…CHGHGRVEKT (79 aa)) form a CR-type zinc finger. Positions 150, 153, 167, 170, 189, 192, 203, and 206 each coordinate Zn(2+). 4 CXXCXGXG motif repeats span residues 150–157 (CDICHGSG), 167–174 (CPTCHGSG), 189–196 (CPHCHGRG), and 203–210 (CNKCHGHG).

It belongs to the DnaJ family. As to quaternary structure, homodimer. The cofactor is Zn(2+).

Its subcellular location is the cytoplasm. In terms of biological role, participates actively in the response to hyperosmotic and heat shock by preventing the aggregation of stress-denatured proteins and by disaggregating proteins, also in an autonomous, DnaK-independent fashion. Unfolded proteins bind initially to DnaJ; upon interaction with the DnaJ-bound protein, DnaK hydrolyzes its bound ATP, resulting in the formation of a stable complex. GrpE releases ADP from DnaK; ATP binding to DnaK triggers the release of the substrate protein, thus completing the reaction cycle. Several rounds of ATP-dependent interactions between DnaJ, DnaK and GrpE are required for fully efficient folding. Also involved, together with DnaK and GrpE, in the DNA replication of plasmids through activation of initiation proteins. The protein is Chaperone protein DnaJ of Enterobacter sp. (strain 638).